Reading from the N-terminus, the 311-residue chain is Probable inactive peptidyl-prolyl cis-trans isomerase-like 6 (311 aa).

In terms of domain architecture, PPIase cyclophilin-type spans phenylalanine 145–aspartate 308.

Belongs to the cyclophilin-type PPIase family.

Functionally, probable inactive PPIase with no peptidyl-prolyl cis-trans isomerase activity. In Homo sapiens (Human), this protein is Probable inactive peptidyl-prolyl cis-trans isomerase-like 6.